Consider the following 837-residue polypeptide: Tuftelin-interacting protein 11 (837 aa).

2 stretches are compositionally biased toward basic and acidic residues: residues 1 to 13 (MSLS…GEGR) and 50 to 64 (TYGV…DERP). Disordered stretches follow at residues 1 to 21 (MSLS…DDER) and 50 to 136 (TYGV…AGGT). The required for interaction with DHX15 stretch occupies residues 1 to 50 (MSLSHLYRDGEGRVDDDDDERENFEITDWDLQNEFNPNRQRHWQTKEEAT). Ser2, Ser59, and Ser98 each carry phosphoserine. Positions 91–102 (EEAELDDSEDEE) are enriched in acidic residues. Positions 103 to 116 (KPGKQEELPKDLGP) are enriched in basic and acidic residues. Ser144 carries the phosphoserine modification. The G-patch domain occupies 149–195 (TKGIGQKLLQKMGYVPGRGLGKNAQGIINPIEAKQRKGKGAVGAYGS). The disordered stretch occupies residues 183 to 236 (QRKGKGAVGAYGSERTTQSLQDFPVVDSEEEAEEEFQKELSQWRKDPSGSKKKP). The residue at position 210 (Ser210) is a Phosphoserine. Residues 217-231 (EFQKELSQWRKDPSG) are compositionally biased toward basic and acidic residues. The short motif at 700 to 705 (VKDKFN) is the Nuclear localization signal element. The interval 710–734 (IMNRAVSSNVGAYMQPGARENIAYL) is required for nuclear speckle localization.

Belongs to the TFP11/STIP family. In terms of assembly, identified in the spliceosome C complex. Found in the Intron Large (IL) complex, a post-mRNA release spliceosomal complex containing the excised intron, U2, U5 and U6 snRNPs, and splicing factors. Interacts with TUFT1. Interacts with DHX15; indicative for a recruitment of DHX15 to the IL complex. Interacts with GCFC2.

It is found in the cytoplasm. Its subcellular location is the nucleus. Functionally, involved in pre-mRNA splicing, specifically in spliceosome disassembly during late-stage splicing events. Intron turnover seems to proceed through reactions in two lariat-intron associated complexes termed Intron Large (IL) and Intron Small (IS). In cooperation with DHX15 seems to mediate the transition of the U2, U5 and U6 snRNP-containing IL complex to the snRNP-free IS complex leading to efficient debranching and turnover of excised introns. May play a role in the differentiation of ameloblasts and odontoblasts or in the forming of the enamel extracellular matrix. The chain is Tuftelin-interacting protein 11 (TFIP11) from Oryctolagus cuniculus (Rabbit).